A 686-amino-acid chain; its full sequence is Forkhead box protein P1 (686 aa).

Composition is skewed to polar residues over residues methionine 1 to glycine 19 and isoleucine 279 to valine 292. Disordered regions lie at residues methionine 1–glycine 23 and isoleucine 279–serine 306. A compositionally biased stretch (basic and acidic residues) spans proline 295–serine 306. The segment at glycine 315–histidine 340 adopts a C2H2-type zinc-finger fold. The leucine-zipper stretch occupies residues valine 357–leucine 378. The CTBP1-binding stretch occupies residues proline 391–valine 395. Residues threonine 403–leucine 412 show a composition bias toward polar residues. Residues threonine 403–asparagine 440 are disordered. Residues proline 413–threonine 427 show a composition bias toward low complexity. A compositionally biased stretch (polar residues) spans glutamine 428–histidine 439. Residues arginine 474–leucine 564 constitute a DNA-binding region (fork-head). Residues methionine 619–glutamate 686 are disordered. Residues histidine 621–glycine 632 are compositionally biased toward polar residues. Acidic residues predominate over residues tyrosine 676–glutamate 686.

The protein localises to the nucleus. Transcriptional repressor. This is Forkhead box protein P1 (FOXP1) from Gallus gallus (Chicken).